The sequence spans 446 residues: Putative ankyrin repeat protein L273 (446 aa).

6 ANK repeats span residues 71-100 (NGEFLLQLKVPSKNHELVVISVESGWKSNM), 124-153 (DHNKLVSLARKYLNSEMLDFLIDKGLRMRP), 206-237 (TDIENLFCELSKGKFVLEVLIPVNEFDKKILM), 245-277 (VWVSEVYCVGYQNLDDISILQHLIALGCNKMHV), 303-332 (ELEYALCIAAVSGNFNVFSSIINTVKNSYY), and 365-394 (YTDIILVLAVIGGSVEIICLLLKYFYQQII).

This chain is Putative ankyrin repeat protein L273, found in Acanthamoeba polyphaga (Amoeba).